A 294-amino-acid polypeptide reads, in one-letter code: Putative inactive magnesium transporter MRS2-8 (294 aa).

Residues 179-216 are a coiled coil; the sequence is KLKSSMTRLTAQVQKIKDELEQLLEDDEDMAELYLSRK.

Belongs to the CorA metal ion transporter (MIT) (TC 1.A.35.5) family.

This chain is Putative inactive magnesium transporter MRS2-8 (MRS2-8), found in Arabidopsis thaliana (Mouse-ear cress).